A 124-amino-acid chain; its full sequence is Small ribosomal subunit protein bS6m (124 aa).

It belongs to the bacterial ribosomal protein bS6 family. Component of the mitochondrial ribosome small subunit (28S) which comprises a 12S rRNA and about 30 distinct proteins.

Its subcellular location is the mitochondrion. The sequence is that of Small ribosomal subunit protein bS6m (MRPS6) from Bos taurus (Bovine).